The sequence spans 195 residues: CASP-like protein Os03g0196400 (195 aa).

Residues 1–38 are Cytoplasmic-facing; sequence MRQQQAGGVGDGVSPGNVPVCYYGPGGRVPSSLERRAR. A helical membrane pass occupies residues 39–59; it reads AAEVLLRCAACGLAVLAAALL. The Extracellular portion of the chain corresponds to 60-81; it reads GADRQTRVFFSIQKVARYTDMQ. A helical transmembrane segment spans residues 82-102; sequence SLVLLVIANGMAACYSLIQCA. Residues 103-104 lie on the Cytoplasmic side of the membrane; it reads RC. The helical transmembrane segment at 105–125 threads the bilayer; it reads LVMAYIVISAVAAAMEAALIG. Topologically, residues 126-150 are extracellular; the sequence is KYGQPEFQWMKTCHLYKRFCAQAGG. A helical membrane pass occupies residues 151–171; that stretch reads GVACAIAASVNMVGVALISAF. The Cytoplasmic portion of the chain corresponds to 172–195; the sequence is NLFRLYGNSNGGGKATTTTMAGGK.

Belongs to the Casparian strip membrane proteins (CASP) family. In terms of assembly, homodimer and heterodimers.

It localises to the cell membrane. This Oryza sativa subsp. japonica (Rice) protein is CASP-like protein Os03g0196400.